A 99-amino-acid chain; its full sequence is PE family immunomodulator PE35 (99 aa).

The region spanning 1 to 90 (MEKMSHDPIA…DVARTYSQID (90 aa)) is the PE domain.

The protein belongs to the mycobacterial PE family. Interacts with PPE68. PE35/PPE68 complex interacts with human TLR2.

It localises to the secreted. It is found in the cell surface. Plays a major role in RD1-associated pathogenesis, and may contribute to the establishment and maintenance of M.tuberculosis infection. Together with PPE68, stimulates the secretion of IL-10 and MCP-1 from human macrophages, via the interaction with human Toll-like receptor 2 (TLR2). The chain is PE family immunomodulator PE35 (PE35) from Mycobacterium tuberculosis (strain ATCC 25618 / H37Rv).